Here is a 298-residue protein sequence, read N- to C-terminus: Leucine-rich repeat-containing protein 55 (298 aa).

Positions 1–34 (MGDTWAQLPWPGPPHSALLLVFFLLAAGVMHSDA) are cleaved as a signal peptide. Residues 35–65 (GTSCPVLCTCRNQVVDCSNQRLFSVPPDLPM) form the LRRNT domain. 2 cysteine pairs are disulfide-bonded: Cys38–Cys44 and Cys42–Cys51. 5 LRR repeats span residues 66 to 87 (DTRN…YLTC), 90 to 111 (ELRV…LFLH), 114 to 135 (RLAH…MFRE), 138 to 160 (GLVH…AFQG), and 163 to 186 (HLRD…EGLP). The LRRCT domain occupies 196-251 (NPWVCGCTMEPLLKWLRNRIQRCTADSQLAECRGPPEVEGAPLFSLTEESFKACHL). Disulfide bonds link Cys200/Cys227 and Cys202/Cys249. Residues 259-279 (LFIAFVGFVVSIASVATNFLL) form a helical membrane-spanning segment.

Interacts with KCNMA1.

It localises to the cell membrane. Functionally, auxiliary protein of the large-conductance, voltage and calcium-activated potassium channel (BK alpha). Modulates gating properties by producing a marked shift in the BK channel's voltage dependence of activation in the hyperpolarizing direction, and in the absence of calcium. The chain is Leucine-rich repeat-containing protein 55 (Lrrc55) from Mus musculus (Mouse).